We begin with the raw amino-acid sequence, 167 residues long: Phosphopantetheine adenylyltransferase (167 aa).

A substrate-binding site is contributed by Ser-8. Residues Ser-8–Phe-9 and His-16 contribute to the ATP site. Substrate-binding residues include Lys-40, Leu-74, and Arg-88. ATP contacts are provided by residues Gly-89–Arg-91, Glu-99, and Trp-123–Ser-129.

This sequence belongs to the bacterial CoaD family. In terms of assembly, homohexamer. Mg(2+) serves as cofactor.

Its subcellular location is the cytoplasm. It carries out the reaction (R)-4'-phosphopantetheine + ATP + H(+) = 3'-dephospho-CoA + diphosphate. Its pathway is cofactor biosynthesis; coenzyme A biosynthesis; CoA from (R)-pantothenate: step 4/5. Its function is as follows. Reversibly transfers an adenylyl group from ATP to 4'-phosphopantetheine, yielding dephospho-CoA (dPCoA) and pyrophosphate. This chain is Phosphopantetheine adenylyltransferase, found in Deinococcus radiodurans (strain ATCC 13939 / DSM 20539 / JCM 16871 / CCUG 27074 / LMG 4051 / NBRC 15346 / NCIMB 9279 / VKM B-1422 / R1).